The chain runs to 218 residues: Protein-L-isoaspartate O-methyltransferase (218 aa).

Residue Ser-66 is part of the active site.

This sequence belongs to the methyltransferase superfamily. L-isoaspartyl/D-aspartyl protein methyltransferase family.

It is found in the cytoplasm. The enzyme catalyses [protein]-L-isoaspartate + S-adenosyl-L-methionine = [protein]-L-isoaspartate alpha-methyl ester + S-adenosyl-L-homocysteine. Its function is as follows. Catalyzes the methyl esterification of L-isoaspartyl residues in peptides and proteins that result from spontaneous decomposition of normal L-aspartyl and L-asparaginyl residues. It plays a role in the repair and/or degradation of damaged proteins. The polypeptide is Protein-L-isoaspartate O-methyltransferase (Caulobacter sp. (strain K31)).